A 983-amino-acid polypeptide reads, in one-letter code: Ephrin type-A receptor 3 (983 aa).

A signal peptide spans 1 to 20 (MDCHLSILVLLGCCVLSCSG). Topologically, residues 21-540 (ELSPQPSNEV…SFSISGENSH (520 aa)) are extracellular. The Eph LBD domain maps to 29 to 206 (EVNLLDSKTI…YFKKCPFTVK (178 aa)). Asn231, Asn336, Asn390, Asn403, and Asn492 each carry an N-linked (GlcNAc...) asparagine glycan. 2 Fibronectin type-III domains span residues 324–434 (PPSA…TNQA) and 435–530 (APSP…TSPD). Residues 541-564 (VVMIAISAAVAIIVLTVVTYVLVG) traverse the membrane as a helical segment. At 565–983 (RFCGYHKSKH…TQSKNGPVPV (419 aa)) the chain is on the cytoplasmic side. Phosphotyrosine; by autocatalysis occurs at positions 596 and 602. A Protein kinase domain is found at 621–882 (ISIDKVVGAG…QIVSILDKLI (262 aa)). ATP contacts are provided by residues 628 to 633 (GAGEFG), Lys653, and 700 to 706 (EYMENGS). Tyr701 is modified (phosphotyrosine; by autocatalysis). Asp746 functions as the Proton acceptor in the catalytic mechanism. Position 750–751 (750–751 (RN)) interacts with ATP. The residue at position 779 (Tyr779) is a Phosphotyrosine; by autocatalysis. In terms of domain architecture, SAM spans 911–975 (ATFHTTGDWL…ISTIKALETQ (65 aa)). Tyr937 bears the Phosphotyrosine mark. Residues 981 to 983 (VPV) carry the PDZ-binding motif.

It belongs to the protein kinase superfamily. Tyr protein kinase family. Ephrin receptor subfamily. In terms of assembly, heterotetramer upon binding of the ligand. The heterotetramer is composed of an ephrin dimer and a receptor dimer. Oligomerization is probably required to induce biological responses. Forms a ternary EFNA5-EPHA3-ADAM10 complex mediating EFNA5 extracellular domain shedding by ADAM10 which regulates the EFNA5-EPHA3 complex internalization and function. Interacts (phosphorylated) with PTPN1; dephosphorylates EPHA3 and may regulate its trafficking and function. Interacts (phosphorylated) with CRK; mediates EFNA5-EPHA3 signaling through RHOA GTPase activation. Interacts with NCK1 (via SH2 domain); mediates EFNA5-EPHA3 signaling. Autophosphorylates upon activation by EFNA5. Phosphorylation on Tyr-602 mediates interaction with NCK1. Dephosphorylated by PTPN1. In terms of tissue distribution, greatest levels of expression occurring in the brain, also detected in testis. Expressed in myogenic progenitor cells.

Its subcellular location is the cell membrane. It is found in the secreted. The catalysed reaction is L-tyrosyl-[protein] + ATP = O-phospho-L-tyrosyl-[protein] + ADP + H(+). Functionally, receptor tyrosine kinase which binds promiscuously membrane-bound ephrin family ligands residing on adjacent cells, leading to contact-dependent bidirectional signaling into neighboring cells. The signaling pathway downstream of the receptor is referred to as forward signaling while the signaling pathway downstream of the ephrin ligand is referred to as reverse signaling. Highly promiscuous for ephrin-A ligands it binds preferentially EFNA5. Upon activation by EFNA5 regulates cell-cell adhesion, cytoskeletal organization and cell migration. Plays a role in cardiac cells migration and differentiation and regulates the formation of the atrioventricular canal and septum during development probably through activation by EFNA1. Involved in the retinotectal mapping of neurons. May also control the segregation but not the guidance of motor and sensory axons during neuromuscular circuit development. The protein is Ephrin type-A receptor 3 (Epha3) of Mus musculus (Mouse).